The following is a 249-amino-acid chain: MTNTTTIQFNALLLDIEGTITSISFVKDELFPYAFENVGKYLEEHYDKPATQIIIEDLRRLAEQQLETDADVVKIRERKQECIEDVTKNVRHWIKRDKKLTPMKALQGLIWEEAYQRGYVKGHVYPDVLPILKIIESRQIPIYIYSSGSVHAQKLLFANSVEGDMTKILYGYFDTNIGLKGETSSYTKISEQIGVPEKDILFLTDVEAEAAAASKAGLQTRLVIRPGNATLTQEAKNAYGTIHTLEEIL.

2 residues coordinate Mg(2+): D15 and E17. Residues 146–147 (SS) and K180 contribute to the substrate site. D205 lines the Mg(2+) pocket.

This sequence belongs to the HAD-like hydrolase superfamily. MasA/MtnC family. Monomer. The cofactor is Mg(2+).

Its subcellular location is the cytoplasm. The protein localises to the nucleus. It carries out the reaction 5-methylsulfanyl-2,3-dioxopentyl phosphate + H2O = 1,2-dihydroxy-5-(methylsulfanyl)pent-1-en-3-one + phosphate. The protein operates within amino-acid biosynthesis; L-methionine biosynthesis via salvage pathway; L-methionine from S-methyl-5-thio-alpha-D-ribose 1-phosphate: step 3/6. Its pathway is amino-acid biosynthesis; L-methionine biosynthesis via salvage pathway; L-methionine from S-methyl-5-thio-alpha-D-ribose 1-phosphate: step 4/6. In terms of biological role, bifunctional enzyme that catalyzes the enolization of 2,3-diketo-5-methylthiopentyl-1-phosphate (DK-MTP-1-P) into the intermediate 2-hydroxy-3-keto-5-methylthiopentenyl-1-phosphate (HK-MTPenyl-1-P), which is then dephosphorylated to form the acireductone 1,2-dihydroxy-3-keto-5-methylthiopentene (DHK-MTPene). This is Enolase-phosphatase E1 from Caenorhabditis briggsae.